The chain runs to 210 residues: Mitochondrial cardiolipin hydrolase (210 aa).

Topologically, residues 1-6 (MLLWGR) are mitochondrial intermembrane. Residues 7–24 (WKVVAGLAGLALSLELLL) form a helical membrane-spanning segment. Over 25-210 (RYMRRRKPIR…YDFFPEKENK (186 aa)) the chain is Cytoplasmic. The PLD phosphodiesterase domain maps to 138-165 (SSGYMHHKFAVVDGTVVLTGSLNWTVQA). Residues histidine 143, lysine 145, and aspartate 150 contribute to the active site.

The protein belongs to the phospholipase D family. MitoPLD/Zucchini subfamily. As to quaternary structure, homodimer.

It is found in the mitochondrion outer membrane. It carries out the reaction a cardiolipin + H2O = a 1,2-diacyl-sn-glycero-3-phospho-(1'-sn-glycerol) + a 1,2-diacyl-sn-glycero-3-phosphate + H(+). Functionally, presents phospholipase and nuclease activities, depending on the different physiological conditions. Plays a key role in mitochondrial fusion and fission via its phospholipase activity. In its phospholipase role, it uses the mitochondrial lipid cardiolipin as substrate to generate phosphatidate (PA or 1,2-diacyl-sn-glycero-3-phosphate), a second messenger signaling lipid. Production of PA facilitates Mitofusin-mediated fusion, whereas the cleavage of PA by the Lipin family of phosphatases produces diacylgycerol (DAG) which promotes mitochondrial fission. Regulates mitochondrial shape through facilitating mitochondrial fusion. During spermatogenesis, plays a critical role in PIWI-interacting RNA (piRNA) biogenesis. piRNAs provide essential protection against the activity of mobile genetic elements. piRNA-mediated transposon silencing is thus critical for maintaining genome stability, in particular in germline cells when transposons are mobilized as a consequence of wide-spread genomic demethylation. Has been shown to be a backbone-non-specific, single strand-specific nuclease, cleaving either RNA or DNA substrates with similar affinity. Produces 5' phosphate and 3' hydroxyl termini, suggesting it could directly participate in the processing of primary piRNA transcripts. Has been proposed to act as a cardiolipin hydrolase to generate phosphatidic acid at mitochondrial surface. Although it cannot be excluded that it can act as a phospholipase in some circumstances, this activity could not be confirmed. The chain is Mitochondrial cardiolipin hydrolase (pld6) from Xenopus tropicalis (Western clawed frog).